The chain runs to 729 residues: Cytoplasmic polyadenylation element-binding protein 4 (729 aa).

2 disordered regions span residues 20–49 (FPVR…NNNT) and 78–133 (EKAK…KEKI). Residues 24–35 (FHPHLQPPHHHQ) are compositionally biased toward basic residues. Residues 83–96 (QQQEQQDPLEKQQL) show a composition bias toward low complexity. 3 positions are modified to phosphoserine: serine 97, serine 99, and serine 137. Residues 218 to 328 (FGGSFSPQIG…RGLNGGITPL (111 aa)) are disordered. Basic residues predominate over residues 232-249 (HHPHHPHFQHHHSQHQQQ). 2 positions are modified to phosphoserine: serine 252 and serine 255. Residues 285–300 (WSSYQSPSPTPSSSWS) show a composition bias toward low complexity. The segment covering 301–313 (PGGGGYGGWGGSQ) has biased composition (gly residues). Position 326 is a phosphothreonine (threonine 326). Serine 330 and serine 332 each carry phosphoserine. RRM domains are found at residues 472–563 (RKVF…PWNL) and 580–662 (KTIF…PYVL). An RNA-binding region spans residues 541 to 543 (KLY). Residues cysteine 667, cysteine 675, cysteine 684, cysteine 689, cysteine 694, cysteine 697, histidine 702, and histidine 710 each coordinate Zn(2+).

This sequence belongs to the RRM CPEB family. Interacts with TOB1. As to expression, expressed in pancreas in islets and ductal cells (at protein level). Expressed in melanocytes.

It is found in the cytoplasm. The protein resides in the cell projection. It localises to the dendrite. Its subcellular location is the dendritic spine. The protein localises to the postsynaptic density. It is found in the axon. The protein resides in the growth cone. It localises to the endoplasmic reticulum. Its subcellular location is the perinuclear region. In terms of biological role, sequence-specific RNA-binding protein that binds to the cytoplasmic polyadenylation element (CPE), an uridine-rich sequence element (consensus sequence 5'-UUUUUAU-3') within the mRNA 3'-UTR. RNA binding results in a clear conformational change analogous to the Venus fly trap mechanism. Regulates activation of unfolded protein response (UPR) in the process of adaptation to ER stress in liver, by maintaining translation of CPE-regulated mRNAs in conditions in which global protein synthesis is inhibited. Required for cell cycle progression, specifically for cytokinesis and chromosomal segregation. Plays a role as an oncogene promoting tumor growth and progression by positively regulating translation of t-plasminogen activator/PLAT. Stimulates proliferation of melanocytes. In contrast to CPEB1 and CPEB3, does not play role in synaptic plasticity, learning and memory. The chain is Cytoplasmic polyadenylation element-binding protein 4 (CPEB4) from Homo sapiens (Human).